The sequence spans 222 residues: Protein THYLAKOID ASSEMBLY 8, chloroplastic (222 aa).

The transit peptide at 1–32 directs the protein to the chloroplast; it reads MALSLSQTRPPSLSHSHTLSVIVPKRTFVSIR. 2 PPR repeats span residues 115–149 and 150–184; these read DLVL…DQRS and DDKA…GWGS.

The protein belongs to the PPR family. P subfamily.

The protein localises to the plastid. It localises to the chloroplast thylakoid membrane. In terms of biological role, essential protein required during embryogenesis. Mediates group II organellar RNA introns splicing (e.g. ycf3-2 and trnA). Binds weakly to specific RNA. Promotes the biogenesis of chloroplast thylakoid membranes. This is Protein THYLAKOID ASSEMBLY 8, chloroplastic from Arabidopsis thaliana (Mouse-ear cress).